We begin with the raw amino-acid sequence, 775 residues long: DENN domain-containing protein 1B (775 aa).

One can recognise a uDENN domain in the interval 14–143; it reads DLVLKVKCHA…YNHPVPKANT (130 aa). Positions 180 to 316 constitute a cDENN domain; the sequence is GLPTIPESRN…VVSALKNKLK (137 aa). The dDENN domain occupies 318-395; sequence QSTATGDGVA…DGRLAKLNAG (78 aa). An FXDXF motif motif is present at residues 398-402; sequence FSDVF. Residue Tyr-520 is modified to Phosphotyrosine. Phosphoserine is present on residues Ser-535, Ser-536, Ser-549, and Ser-552. The Clathrin box motif lies at 566–575; sequence DLLGEILDTL. Disordered regions lie at residues 635–654 and 671–706; these read DSAL…VSSS and HLGA…KRET. Residues 639 to 651 show a composition bias toward basic residues; it reads HGKHLPPSPRKRV. A phosphoserine mark is found at Ser-652 and Ser-653. A compositionally biased stretch (basic and acidic residues) spans 695–706; that stretch reads QTDKGKTEKRET.

In terms of assembly, interacts with RAB35. Interacts with clathrin heavy chain/CLTC. Interacts with components of the adapter protein complex 2 (AP-2) AP2A2 and AP2B1. Interacts with CD3E. In terms of processing, phosphorylated on serine and/or threonine, possibly regulating the guanine nucleotide exchange factor (GEF) activity. Highly expressed in dendritic and natural killer cells and at lower levels in other myeloid lineage cells and in pituitary. Significantly up-regulated in effector memory T-cells as compared with naive T-cells.

It is found in the cytoplasm. Its subcellular location is the cytosol. The protein localises to the cytoplasmic vesicle. It localises to the clathrin-coated vesicle. Guanine nucleotide exchange factor (GEF) for RAB35 that acts as a regulator of T-cell receptor (TCR) internalization in TH2 cells. Acts by promoting the exchange of GDP to GTP, converting inactive GDP-bound RAB35 into its active GTP-bound form. Plays a role in clathrin-mediated endocytosis. Controls cytokine production in TH2 lymphocytes by controlling the rate of TCR internalization and routing to endosomes: acts by mediating clathrin-mediated endocytosis of TCR via its interaction with the adapter protein complex 2 (AP-2) and GEF activity. Dysregulation leads to impaired TCR down-modulation and recycling, affecting cytokine production in TH2 cells. The protein is DENN domain-containing protein 1B of Homo sapiens (Human).